The chain runs to 491 residues: Acetyl-coenzyme A carboxylase carboxyl transferase subunit beta, chloroplastic (491 aa).

The interval 26–49 (ARPRPIGNTNGSQDPSINDRDKNG) is disordered. Residues 32–41 (GNTNGSQDPS) are compositionally biased toward polar residues. Positions 222–491 (LWVQCDNCYG…PLNHNSQVKR (270 aa)) constitute a CoA carboxyltransferase N-terminal domain. Zn(2+)-binding residues include Cys-226, Cys-229, Cys-245, and Cys-248. The C4-type zinc-finger motif lies at 226 to 248 (CDNCYGLNYKKIFSSKMNICEQC).

It belongs to the AccD/PCCB family. In terms of assembly, acetyl-CoA carboxylase is a heterohexamer composed of biotin carboxyl carrier protein, biotin carboxylase and 2 subunits each of ACCase subunit alpha and ACCase plastid-coded subunit beta (accD). Zn(2+) is required as a cofactor.

The protein resides in the plastid. It is found in the chloroplast stroma. The enzyme catalyses N(6)-carboxybiotinyl-L-lysyl-[protein] + acetyl-CoA = N(6)-biotinyl-L-lysyl-[protein] + malonyl-CoA. It participates in lipid metabolism; malonyl-CoA biosynthesis; malonyl-CoA from acetyl-CoA: step 1/1. In terms of biological role, component of the acetyl coenzyme A carboxylase (ACC) complex. Biotin carboxylase (BC) catalyzes the carboxylation of biotin on its carrier protein (BCCP) and then the CO(2) group is transferred by the transcarboxylase to acetyl-CoA to form malonyl-CoA. This is Acetyl-coenzyme A carboxylase carboxyl transferase subunit beta, chloroplastic from Ceratophyllum demersum (Rigid hornwort).